The primary structure comprises 617 residues: MDREIRILHTADTHLGYRQYHSEVRRQDFFKAFETVIKDAVDMQVDAVVHAGDLFDSRNPTLEDLLETMNVLSRLKVANIPFFGIVGNHESKQSTQWLDLFEEMGLAGRLGKAPKMVGDVAIYGIDSVPKSKIPLFDYSGFEIPESLPENCRKLLVMHQIMQPSPFPDWDCAEVIENLPFKADAVLLGDYHEYEKIKVGESWVTYSGSTERNSASEKEPRSYSIITLSGEGLEISRRTIPTRNFLFITAKVDGEEKPFEQIFSTVNEHLEEIPESVVFLDVSGDSSSVLSFSEIEEYLLSKGALVVKVKDARVKEGIPEEVIKVAFHDPDRAVAEELRRMSLNDGGLIVDEVIRSPDVPRSRVDEETENRLLGLIEAIDFKDPDFMIKIPVSHVSPVDPSSSVSSIESSGSVSPIDSVSTVSPSSPSSSAIIKEPEELKPPGAAEEIENPKPAGVTEFTAAVAAKSETLMPPVRIQRSESLNESLNKIFEKHDVVPESPETAGSIAGSVETAVEDEISKVTPDSGVITAPQSSSPVSFSDNSQTGFSAISPPESIPSPEILKENSEADADEKPVDGKLSEEKPVGVPDKATKTVKQSHRKGKEKSAVPRQYNLGDYL.

Asp-12, His-14, Asp-53, and Asn-88 together coordinate Mn(2+). His-89 acts as the Proton donor in catalysis. His-158, Asp-189, and His-191 together coordinate Mn(2+). Over residues 395-432 the composition is skewed to low complexity; it reads SPVDPSSSVSSIESSGSVSPIDSVSTVSPSSPSSSAII. 2 disordered regions span residues 395–437 and 513–617; these read SPVD…EPEE and VEDE…GDYL. Residues 529 to 547 show a composition bias toward polar residues; the sequence is APQSSSPVSFSDNSQTGFS. Residues 549–559 are compositionally biased toward low complexity; sequence ISPPESIPSPE. Basic and acidic residues predominate over residues 560–583; the sequence is ILKENSEADADEKPVDGKLSEEKP.

Belongs to the MRE11/RAD32 family. Homodimer. Forms a heterotetramer composed of two Mre11 subunits and two Rad50 subunits. Mn(2+) serves as cofactor.

Its activity is regulated as follows. Nuclease activity is regulated by Rad50. Part of the Rad50/Mre11 complex, which is involved in the early steps of DNA double-strand break (DSB) repair. The complex may facilitate opening of the processed DNA ends to aid in the recruitment of HerA and NurA. Mre11 binds to DSB ends and has both double-stranded 3'-5' exonuclease activity and single-stranded endonuclease activity. The sequence is that of DNA double-strand break repair protein Mre11 from Methanosarcina mazei (strain ATCC BAA-159 / DSM 3647 / Goe1 / Go1 / JCM 11833 / OCM 88) (Methanosarcina frisia).